The primary structure comprises 544 residues: Chaperonin GroEL (544 aa).

Residues 30–33 (TLGP), lysine 51, 87–91 (DGTTT), glycine 415, 481–483 (DAL), and aspartate 497 each bind ATP.

This sequence belongs to the chaperonin (HSP60) family. As to quaternary structure, forms a cylinder of 14 subunits composed of two heptameric rings stacked back-to-back. Interacts with the co-chaperonin GroES.

It is found in the cytoplasm. The catalysed reaction is ATP + H2O + a folded polypeptide = ADP + phosphate + an unfolded polypeptide.. Together with its co-chaperonin GroES, plays an essential role in assisting protein folding. The GroEL-GroES system forms a nano-cage that allows encapsulation of the non-native substrate proteins and provides a physical environment optimized to promote and accelerate protein folding. This Chlamydia trachomatis serovar L2 (strain ATCC VR-902B / DSM 19102 / 434/Bu) protein is Chaperonin GroEL.